Consider the following 354-residue polypeptide: Guanine nucleotide-binding protein G(o) subunit alpha (354 aa).

Residue Gly2 is the site of N-myristoyl glycine attachment. Cys3 carries the S-palmitoyl cysteine lipid modification. Residues 32–354 (KDIKLLLLGA…ANNLRGCGLY (323 aa)) enclose the G-alpha domain. The interval 35-48 (KLLLLGAGESGKST) is G1 motif. GTP contacts are provided by residues 40–47 (GAGESGKS), 176–182 (LRTRVKT), 201–205 (DVGGQ), 270–273 (NKKD), and Ala326. Mg(2+) is bound by residues Ser47 and Thr182. The tract at residues 174-182 (DILRTRVKT) is G2 motif. Residues 197–206 (FKLFDVGGQR) form a G3 motif region. The segment at 266 to 273 (ILFLNKKD) is G4 motif. The interval 324-329 (TCATDT) is G5 motif.

Belongs to the G-alpha family. G(i/o/t/z) subfamily. In terms of assembly, g proteins are composed of 3 units; alpha, beta and gamma. The alpha chain contains the guanine nucleotide binding site. Interacts (in GDP-bound form) with gpr-1; gpr-1 forms a complex with gpr-2 and lin-5. Interacts (in GDP-bound form) with gpb-1. Interacts (in GDP-bound form) with gbas-1 (via GBA motif); the interaction leads to activation of goa-1. As to expression, expressed in the ASER neuron and the intestine.

Its function is as follows. Guanine nucleotide-binding proteins (G proteins) are involved as modulators or transducers in various transmembrane signaling systems. In the 1-cell embryo, probably together with gpa-16, controls nuclear rotation and spindle elongation during mitosis. During the first embryonic cell divisions, plays a role in gpr-1/2 cortical localization and in the proper orientation of EMS blastomere mitotic spindle. Polarity determinants (par genes) may regulate lin-5/gpr-1/gpr-2/goa-1 locally to create the asymmetric forces that drive spindle movement. Involved in chemosensory responses to attractive and repellent odors detected by AWC and AWB sensory neurons, respectively. In ASER neurons, acts downstream of glr-3 to regulate cold avoidance behavior via calcium signaling, and it may also play a role in sensing cold in the intestine. Negatively regulates axon regeneration after injury downstream of the inhibitory compound arachidonoyl ethanolamide (AEA) by antagonizing the activation of the JNK pathway (mlk-1/mek-1/kgb-1). In neurons, may negatively regulate diacylglycerol (DAG) production mediated by egl-30 signaling cascade and thereby negatively regulates acetylcholine release. Couples to the muscarinic acetylcholine receptor gar-2 to negatively regulate cholinergic receptor activity in the presence of high levels of acetylcholine in ventral cord motor neurons. Plays a role in the navigational capacity of sperm and the targeting of sperm derived from males to the fertilization site in the uterus of hermaphrodites. Involved in egg-laying and in regulating dopamine-mediated locomotion. Most likely couples to the dopamine receptors dop-2 and dop-3 to positively regulate the dopamine-mediated suppression of crh-1/CREB1 transcription factor activation in cholinergic SIA neurons in the presence of food. In Caenorhabditis elegans, this protein is Guanine nucleotide-binding protein G(o) subunit alpha.